The following is a 278-amino-acid chain: 4-deoxy-L-threo-5-hexosulose-uronate ketol-isomerase (278 aa).

Zn(2+) is bound by residues His-196, His-198, Glu-203, and His-245.

It belongs to the KduI family. In terms of assembly, homohexamer. Zn(2+) serves as cofactor.

It carries out the reaction 5-dehydro-4-deoxy-D-glucuronate = 3-deoxy-D-glycero-2,5-hexodiulosonate. The protein operates within glycan metabolism; pectin degradation; 2-dehydro-3-deoxy-D-gluconate from pectin: step 4/5. Catalyzes the isomerization of 5-dehydro-4-deoxy-D-glucuronate to 3-deoxy-D-glycero-2,5-hexodiulosonate. This Escherichia coli (strain SMS-3-5 / SECEC) protein is 4-deoxy-L-threo-5-hexosulose-uronate ketol-isomerase.